Reading from the N-terminus, the 361-residue chain is Histidine biosynthesis bifunctional protein HisB (361 aa).

The segment at 1–172 (MSQPTLFIDR…PKTTACERPP (172 aa)) is histidinol-phosphatase. The Nucleophile role is filled by Asp-9. Mg(2+)-binding residues include Asp-9 and Asp-11. Asp-11 serves as the catalytic Proton donor. 4 residues coordinate Zn(2+): Cys-92, His-94, Cys-100, and Cys-102. Residue Asp-129 participates in Mg(2+) binding. The segment at 173–361 (RYAEVVRTTK…NELPSSKGVL (189 aa)) is imidazoleglycerol-phosphate dehydratase.

The protein in the N-terminal section; belongs to the histidinol-phosphatase family. This sequence in the C-terminal section; belongs to the imidazoleglycerol-phosphate dehydratase family. Requires Mg(2+) as cofactor. Zn(2+) serves as cofactor.

Its subcellular location is the cytoplasm. The enzyme catalyses D-erythro-1-(imidazol-4-yl)glycerol 3-phosphate = 3-(imidazol-4-yl)-2-oxopropyl phosphate + H2O. It carries out the reaction L-histidinol phosphate + H2O = L-histidinol + phosphate. The protein operates within amino-acid biosynthesis; L-histidine biosynthesis; L-histidine from 5-phospho-alpha-D-ribose 1-diphosphate: step 6/9. It participates in amino-acid biosynthesis; L-histidine biosynthesis; L-histidine from 5-phospho-alpha-D-ribose 1-diphosphate: step 8/9. The chain is Histidine biosynthesis bifunctional protein HisB from Actinobacillus pleuropneumoniae serotype 7 (strain AP76).